Here is a 430-residue protein sequence, read N- to C-terminus: MVNLEPMHTEIKMSGDVADSTDARSTFGQVESGNDRNGLDFNRQIKTEDLGDTLQQSLSHRPCHLSQGPTMMPGNQMSGDMASLHPLQQLVLVPGHLQSVSQFLLSQTPPGQQGLQPNLLSFPQQQSTLLLPQTGPGLTSQAVGRPGLSGSSLEPHLEASQHLPGPKHLPGPGGNDEPTDLEELEKFAKTFKQRRIKLGFTQGDVGLAMGKLYGNDFSQTTISRFEALNLSFKNMCKLKPLLEKWLNDAESSPSDPSASTPSSYPTLSEVFGRKRKKRTSIETNIRLTLEKRFQDNPKPSSEEISMIAEQLSMEKEVVRVWFCNRRQKEKRINCPVATPVKPPIYNSRLVSPSGSLGSLSVPPVHSTMPGTVTSSCSPGNNSRPSSPGSGLHASSPTASQNNSKAAMNPSSAAFNSSGSWYRWNHPAYLH.

Disordered regions lie at residues 1-40 (MVNLEPMHTEIKMSGDVADSTDARSTFGQVESGNDRNGLD), 60-81 (HRPCHLSQGPTMMPGNQMSGDM), 129-180 (LLLP…EPTD), and 248-267 (DAESSPSDPSASTPSSYPTL). Polar residues-rich tracts occupy residues 23–32 (ARSTFGQVES) and 67–78 (QGPTMMPGNQMS). Over residues 129 to 139 (LLLPQTGPGLT) the composition is skewed to low complexity. A POU-specific domain is found at 176–250 (DEPTDLEELE…LLEKWLNDAE (75 aa)). The segment covering 251–267 (SSPSDPSASTPSSYPTL) has biased composition (low complexity). Residues 274–333 (KRKKRTSIETNIRLTLEKRFQDNPKPSSEEISMIAEQLSMEKEVVRVWFCNRRQKEKRIN) constitute a DNA-binding region (homeobox). Low complexity-rich tracts occupy residues 355–364 (SLGSLSVPPV) and 374–390 (SSCSPGNNSRPSSPGSG). Residues 355 to 413 (SLGSLSVPPVHSTMPGTVTSSCSPGNNSRPSSPGSGLHASSPTASQNNSKAAMNPSSAA) form a disordered region. Over residues 392–413 (HASSPTASQNNSKAAMNPSSAA) the composition is skewed to polar residues.

Belongs to the POU transcription factor family. Class-2 subfamily. As to quaternary structure, interacts (via the POU domain) with POU2AF1 and POU2AF2 in a DNA-dependent manner; this interaction recruits POU2AF2 to chromatin and increases POU2F3 transactivation activity. In terms of tissue distribution, expressed in epidermis and hair follicles.

It localises to the nucleus. Transcription factor that binds to the octamer motif (5'-ATTTGCAT-3') and regulates cell type-specific differentiation pathways. Involved in the regulation of keratinocytes differentiation. The POU2F3-POU2AF2/POU2AF3 complex drives the expression of tuft-cell-specific genes, a rare chemosensory cells that coordinate immune and neural functions within mucosal epithelial tissues. Functionally, inhibits transactivation by POU2F1. The sequence is that of POU domain, class 2, transcription factor 3 (Pou2f3) from Rattus norvegicus (Rat).